We begin with the raw amino-acid sequence, 66 residues long: Large ribosomal subunit protein bL35 (66 aa).

Residues 1–23 (MPKMKTHRASAKRFKRTANGGLK) form a disordered region.

It belongs to the bacterial ribosomal protein bL35 family.

The polypeptide is Large ribosomal subunit protein bL35 (Lactobacillus helveticus (strain DPC 4571)).